A 395-amino-acid chain; its full sequence is Tyrosine--tRNA ligase (395 aa).

Residues 42 to 51 (PTAPDIHLGH) carry the 'HIGH' region motif. The short motif at 226–230 (KMSKS) is the 'KMSKS' region element. Residue Lys-229 participates in ATP binding. An S4 RNA-binding domain is found at 334 to 394 (IGLANLLKEA…GKRKFARVTV (61 aa)).

This sequence belongs to the class-I aminoacyl-tRNA synthetase family. TyrS type 2 subfamily. As to quaternary structure, homodimer.

The protein resides in the cytoplasm. It catalyses the reaction tRNA(Tyr) + L-tyrosine + ATP = L-tyrosyl-tRNA(Tyr) + AMP + diphosphate + H(+). Functionally, catalyzes the attachment of tyrosine to tRNA(Tyr) in a two-step reaction: tyrosine is first activated by ATP to form Tyr-AMP and then transferred to the acceptor end of tRNA(Tyr). The chain is Tyrosine--tRNA ligase from Mannheimia succiniciproducens (strain KCTC 0769BP / MBEL55E).